The chain runs to 105 residues: Large ribosomal subunit protein uL24 (105 aa).

Belongs to the universal ribosomal protein uL24 family. Part of the 50S ribosomal subunit.

Functionally, one of two assembly initiator proteins, it binds directly to the 5'-end of the 23S rRNA, where it nucleates assembly of the 50S subunit. In terms of biological role, one of the proteins that surrounds the polypeptide exit tunnel on the outside of the subunit. This Nitrosomonas europaea (strain ATCC 19718 / CIP 103999 / KCTC 2705 / NBRC 14298) protein is Large ribosomal subunit protein uL24.